Reading from the N-terminus, the 65-residue chain is Large ribosomal subunit protein bL35 (65 aa).

Positions 1–26 are disordered; the sequence is MPKMKSNKGASKRFKKTASGGFKCKQ.

The protein belongs to the bacterial ribosomal protein bL35 family.

The sequence is that of Large ribosomal subunit protein bL35 from Idiomarina loihiensis (strain ATCC BAA-735 / DSM 15497 / L2-TR).